The primary structure comprises 277 residues: MARCDVLVSADWAESNLHAPKVVFVEVDEDTSAYDRDHIAGAIKLDWRTDLQDPVKRDFVDAQQFSKLLSERGIANEDTVILYGGNNNWFAAYAYWYFKLYGHEKVKLLDGGRKKWELDGRPLSSDPVSRPVTSYTASPPDNTIRAFRDEVLAAINVKNLIDVRSPDEFSGKILAPAHLPQEQSQRPGHIPGAINVPWSRAANEDGTFKSDEELAKLYADAGLDNSKETIAYCRIGERSSHTWFVLRELLGHQNVKNYDGSWTEYGSLVGAPIELGS.

Rhodanese domains are found at residues 18–125 and 154–274; these read HAPK…PLSS and AINV…APIE. The active-site Cysteine persulfide intermediate is the cysteine 233. Arginine 238 provides a ligand contact to substrate.

The enzyme catalyses thiosulfate + hydrogen cyanide = thiocyanate + sulfite + 2 H(+). Functionally, may be a sulfotransferase involved in the formation of thiosulfate. This Mycobacterium tuberculosis (strain CDC 1551 / Oshkosh) protein is Putative thiosulfate sulfurtransferase (cysA1).